The following is a 460-amino-acid chain: MASIARDIFKAYDIRGIVGKTLTDEAAYLIGKAIAAKAAEKGITRIALGRDGRLSGPELMEHIRRGFTDSGINVLNVGMVATPMLYFAAVNECGGSGVMITGSHNPPDYNGFKMMLGGDTLAGEAIQELLSIIEKDGFAAAGKQGSVTEKDISGEYLKHITGHIRLKRPMNIAIDAGNGVGGAFAGKLYKGLGNKVTELFCDVDGTFPNHHPDPSKPKNLQDLIAALKNGDAEIGLAFDGDADRLGVVTKDGNIIYPDRQLMLFAQDVLNRNPGAKVIFDVKSTRLLAPWIKEHGGKAIMEKTGHSFIKSAMKETGAPVAGEMSGHIFFKERWFGFDDGLYAGARLLEILSASDNPSEVLNNLPQSISTPELNIALPEGSNGHQVIDELAAKAEFEGATEIITIDGLRVEFPDGFGLMRASNTTPILVLRFEADTQEAIERIQNQFKAVIESNPNLIWPL.

Ser-103 (phosphoserine intermediate) is an active-site residue. Residue Ser-103 coordinates Mg(2+). Substrate contacts are provided by residues 103 to 104 (SH) and Lys-113. Mg(2+)-binding residues include Asp-239, Asp-241, and Asp-243. Residues 243 to 244 (DR), Thr-303, and 322 to 324 (EMS) each bind substrate.

Belongs to the phosphohexose mutase family. The cofactor is Mg(2+).

The protein localises to the cytoplasm. It carries out the reaction alpha-D-glucose 1-phosphate = alpha-D-glucose 6-phosphate. Functionally, this enzyme participates in both the breakdown and synthesis of glucose. The chain is Phosphoglucomutase (pgm) from Neisseria meningitidis serogroup B (strain ATCC BAA-335 / MC58).